An 815-amino-acid chain; its full sequence is Polyribonucleotide nucleotidyltransferase (815 aa).

Aspartate 489 and aspartate 495 together coordinate Mg(2+). The region spanning 556–615 (PRFYTLQIPTDKIRDLIGPGGKVIRGIVEATGVKIDVEDSGKVNVASSDQEAAKKALKMI) is the KH domain. The S1 motif domain maps to 625–692 (GKTYLGTVTR…DGNRIKLSRK (68 aa)). The tract at residues 700 to 815 (AKMATEGGGD…GGGGGGRGRG (116 aa)) is disordered. A compositionally biased stretch (gly residues) spans 723 to 734 (APGGVTFEGGYE). The span at 735–745 (GGDEPEVEEGE) shows a compositional bias: acidic residues. The span at 775-815 (PHGGGGGAGRGGRGRRPGGGGGGGRGGHGGRGGGGGGRGRG) shows a compositional bias: gly residues.

Belongs to the polyribonucleotide nucleotidyltransferase family. Requires Mg(2+) as cofactor.

The protein resides in the cytoplasm. The enzyme catalyses RNA(n+1) + phosphate = RNA(n) + a ribonucleoside 5'-diphosphate. Its function is as follows. Involved in mRNA degradation. Catalyzes the phosphorolysis of single-stranded polyribonucleotides processively in the 3'- to 5'-direction. The chain is Polyribonucleotide nucleotidyltransferase from Koribacter versatilis (strain Ellin345).